Reading from the N-terminus, the 139-residue chain is Actin-depolymerizing factor 2 (139 aa).

The 133-residue stretch at 7–139 (GLAVSDECKV…SLDIVKSRTN (133 aa)) folds into the ADF-H domain.

Belongs to the actin-binding proteins ADF family. In terms of tissue distribution, expressed in pollen.

In terms of biological role, actin-depolymerizing protein. Severs actin filaments (F-actin) and binds to actin monomers. This is Actin-depolymerizing factor 2 (ADF2) from Zea mays (Maize).